A 369-amino-acid polypeptide reads, in one-letter code: 3',5'-cyclic-nucleotide phosphodiesterase 1 (369 aa).

Belongs to the cyclic nucleotide phosphodiesterase class-II family.

It catalyses the reaction a nucleoside 3',5'-cyclic phosphate + H2O = a nucleoside 5'-phosphate + H(+). Its function is as follows. Controls the level of cAMP in yeast cells, together with the high-affinity cAMP phosphodiesterase (PDE2). The polypeptide is 3',5'-cyclic-nucleotide phosphodiesterase 1 (PDE1) (Saccharomyces cerevisiae (strain ATCC 204508 / S288c) (Baker's yeast)).